The chain runs to 533 residues: MLLLLLLLPMCWAVEVRRPRGVSLTNHHFYDESKPFTCLDGSASIPFDQVNDDYCDCKDGSDEPGTAACPNGSFHCTNTGYKALYISSRWVNDGVCDCCDGTDEYNSGIVCENTCKEKGRKERETLQQMAEVTREGFRLKKILIEDWKKAREEKQKKLIELQAGKKSLEDQVEVLRTLKEEAEKPEEAAKDQHRRLWEEQQAISKEQRERELAASAFQELDDDMDGAVSVAELQTHPELDTDGDGALSEGEAQTLLGGDAQMDAAFFYDRVWAAIRDKYRSEVLPTEYPPSPPAPDVMEPKEEQPPMPSPPTEEEDEDEEDEETEEDEDEEDEDSQGEQPKDAPPPAPAPQTASPTEEDRMPPYDEQTQAFINAAQEARNKFEEAERSLKDMEESIRNLEQEISFDFGPNGEFAYLYSQCYELTTNEYVYRLCPFKLVSQKPKLGGSPTSLGTWGSWAGPDHDKFSAMKYEQGTGCWQGPNRSTTVRLLCGKETVVTSTTEPSRCEYLMELMTPAACPEPPPEYPVEGDHDEL.

The N-terminal stretch at 1–13 (MLLLLLLLPMCWA) is a signal peptide. Ser23 is subject to Phosphoserine. 2 consecutive LDL-receptor class A domains span residues 36–70 (FTCL…AACP) and 71–112 (NGSF…IVCE). 2 disulfides stabilise this stretch: Cys38–Cys57 and Cys55–Cys69. Asp48 contributes to the substrate binding site. Ca(2+) is bound by residues Gln49, Asp52, Tyr54, Asp56, Asp62, and Glu63. Residue Asp52 participates in substrate binding. N-linked (GlcNAc...) asparagine glycosylation is present at Asn71. 3 cysteine pairs are disulfide-bonded: Cys76/Cys98, Cys96/Cys111, and Cys99/Cys115. Ser88 bears the Phosphoserine; by PKC mark. Ca(2+)-binding residues include Asp93, Val95, Asp97, Asp103, and Glu104. Lys165 carries the N6-succinyllysine modification. Ser167 is subject to Phosphoserine. EF-hand domains lie at 208–243 (RERE…DTDG) and 244–279 (DGAL…RDKY). Ca(2+) is bound by residues Asp221, Asp223, Asp225, and Glu232. The disordered stretch occupies residues 284–363 (LPTEYPPSPP…SPTEEDRMPP (80 aa)). Over residues 312–336 (TEEEDEDEEDEETEEDEDEEDEDSQ) the composition is skewed to acidic residues. Ser388 and Ser395 each carry phosphoserine; by PKC. One can recognise an MRH domain in the interval 418 to 519 (SQCYELTTNE…ELMTPAACPE (102 aa)). Cys420 and Cys433 form a disulfide bridge. Phosphoserine; by PKC is present on Ser439. 2 disulfide bridges follow: Cys476–Cys505 and Cys490–Cys517. An N-linked (GlcNAc...) asparagine glycan is attached at Asn481. The Prevents secretion from ER signature appears at 530–533 (HDEL).

In terms of assembly, heterodimer of a catalytic alpha subunit (GANAB) and a beta subunit (PRKCSH). Binds glycosylated PTPRC. In terms of tissue distribution, ubiquitous. Highly expressed in liver, spleen, lung, duodenum, stomach, adrenal gland, pituitary, testis, corpus luteum, uterus and fetal ovary.

It is found in the endoplasmic reticulum. Its pathway is glycan metabolism; N-glycan metabolism. Functionally, regulatory subunit of glucosidase II that cleaves sequentially the 2 innermost alpha-1,3-linked glucose residues from the Glc(2)Man(9)GlcNAc(2) oligosaccharide precursor of immature glycoproteins. Required for efficient PKD1/Polycystin-1 biogenesis and trafficking to the plasma membrane of the primary cilia. The sequence is that of Glucosidase 2 subunit beta (PRKCSH) from Bos taurus (Bovine).